The primary structure comprises 775 residues: MFSSSLKLKTNPLMDNKIHRSSSDRDFRGSTISSVKCSLNNSEDLIVKVRERVKGKVEISPSAYDTAWVAMVPERDYSGQKPRFPECLDWIVENQNADGSWGVQSSSMLKHSLSCTLACLLPLRKWNVASPQLLRNGVEFIRSSSSAATDKNQISPIGFDIVFPMMIQYANDLNLELLLNQDLVNILFQNREAQLTRNKNLEYVAEGLGSSIDWNKVLMHQRSNGSLFNSPATTAAALIHRHDKKCLEYLNSLLSIYKTWVPTIHPMDVYARLCLVDHLQGLGVDRFVHPEIEVVLQETFRLWQQKDDKIFTDATCRAMAFRLLRMQGYHVTPDELGGYVDEESFFATVSFESSGTDTVLELYKASQVRLPEDDDTLEKLHDWTSKFLKQKLQSKTILDQQLERKVEFNLKNYHGILDAVKHRRNFDLYDIDHRRILKTAYRCPTVYNEDILLLTAQDLMTRQVQNQKELQIMERWLEDCRLDKVSGRNAVLVSYFLNANNFPDPRLSEARLAYAKTVTLITFLDDFFDHHGSREDSLLIMELINKWTEPLTVSYPSDEVEILYSALHATITDTAEKVYAVQGRCIKSLIIELWMEVLTAMLGEMDSCNADTPPDFDEYMAFAPKSLGCSLSILPSLHLMGETISEEMVTSLECFELDKHVSIAIRLLNDQQTFERERKERTTNSVTLLMDADQISEEEAVSRIQKLIEHHTKELLKLVVQKEGSVLPRKCKDIFWNTIKVGYCLYRFSDEFTSPQQMKEDMKLLFHDPVLKTTP.

A chloroplast-targeting transit peptide spans 1–36 (MFSSSLKLKTNPLMDNKIHRSSSDRDFRGSTISSVK). Residues D525, D529, N669, Q672, and E677 each coordinate Mg(2+). Positions 525–529 (DDFFD) match the DDXXD motif motif.

It belongs to the terpene synthase family. Mg(2+) serves as cofactor. Ubiquitous expression in roots, stems, leaves and flowers.

The protein localises to the plastid. Its subcellular location is the chloroplast. It catalyses the reaction (+)-copalyl diphosphate = isopimara-8(14),15-diene + diphosphate. It functions in the pathway secondary metabolite biosynthesis; terpenoid biosynthesis. In terms of biological role, involved in the biosynthesis of ent-kaurene diterpenoids natural products such as oridonin, miltiradiene, eriocalyxin B and nezukol, known to exhibit antitumor, anti-inflammatory and antibacterial activities. Catalyzes the conversion of (+)-copalyl diphosphate ((+)-CPP) to isopimaradiene. The protein is Isopimaradiene synthase of Isodon rubescens (Rabdosia rubescens).